A 254-amino-acid chain; its full sequence is Cytochrome c oxidase subunit 2 (254 aa).

The Mitochondrial intermembrane segment spans residues 12 to 38 (DAPEPWQICYQDSATKIMSGIDKLTGE). A helical transmembrane segment spans residues 39-59 (IFYYETLLLIIVGWVLISAII). Over 60-73 (KYTKTELSYKYFNH) the chain is Mitochondrial matrix. The helical transmembrane segment at 74–94 (GTLIEILWTCSPAFILIAISF) threads the bilayer. Topologically, residues 95–248 (PSFKLLYLMD…KYLEWLNIHL (154 aa)) are mitochondrial intermembrane. Cu cation is bound by residues His-182, Cys-217, Glu-219, Cys-221, His-225, and Met-228. Mg(2+) is bound at residue Glu-219.

Belongs to the cytochrome c oxidase subunit 2 family. Component of the cytochrome c oxidase (complex IV, CIV), a multisubunit enzyme composed of a catalytic core of 3 subunits and several supernumerary subunits. The complex exists as a monomer or a dimer and forms supercomplexes (SCs) in the inner mitochondrial membrane with ubiquinol-cytochrome c oxidoreductase (cytochrome b-c1 complex, complex III, CIII). The cofactor is Cu cation.

The protein localises to the mitochondrion inner membrane. It carries out the reaction 4 Fe(II)-[cytochrome c] + O2 + 8 H(+)(in) = 4 Fe(III)-[cytochrome c] + 2 H2O + 4 H(+)(out). In terms of biological role, component of the cytochrome c oxidase, the last enzyme in the mitochondrial electron transport chain which drives oxidative phosphorylation. The respiratory chain contains 3 multisubunit complexes succinate dehydrogenase (complex II, CII), ubiquinol-cytochrome c oxidoreductase (cytochrome b-c1 complex, complex III, CIII) and cytochrome c oxidase (complex IV, CIV), that cooperate to transfer electrons derived from NADH and succinate to molecular oxygen, creating an electrochemical gradient over the inner membrane that drives transmembrane transport and the ATP synthase. Cytochrome c oxidase is the component of the respiratory chain that catalyzes the reduction of oxygen to water. Electrons originating from reduced cytochrome c in the intermembrane space (IMS) are transferred via the dinuclear copper A center (CU(A)) of subunit 2 and heme A of subunit 1 to the active site in subunit 1, a binuclear center (BNC) formed by heme A3 and copper B (CU(B)). The BNC reduces molecular oxygen to 2 water molecules using 4 electrons from cytochrome c in the IMS and 4 protons from the mitochondrial matrix. This is Cytochrome c oxidase subunit 2 from Zancudomyces culisetae (Gut fungus).